A 1287-amino-acid polypeptide reads, in one-letter code: Rho GTPase-activating protein 33 (1287 aa).

Residues 1-40 (MVARSTDSLDGPGEGSVQPLPTAGGPSVKGKPGKRLSAPR) are disordered. Position 8 is a phosphoserine (serine 8). In terms of domain architecture, PX; atypical spans 59 to 168 (FGHIQLLLSP…CGPVLTWMEL (110 aa)). In terms of domain architecture, SH3 spans 186–248 (PAVAAAHVIK…PSECVELFTE (63 aa)). A Rho-GAP domain is found at 315–510 (CDLGEHLSNS…FLLTHVDVLF (196 aa)). 6 disordered regions span residues 551 to 792 (RTQG…SPAA), 813 to 832 (AGGAPASATPTPALSPGRSL), 859 to 1030 (KLRG…VPTP), 1056 to 1075 (GPPSFQPSSPAPVWRSSLGP), 1090 to 1134 (GASE…SPDF), and 1146 to 1287 (PPDH…RSYC). The span at 558–571 (TPTEPTTPKAPASP) shows a compositional bias: low complexity. At serine 570 the chain carries Phosphoserine. The segment covering 572–584 (AERRKGERGEKQR) has biased composition (basic and acidic residues). Residues 622–645 (SGSRPDTVTLRSAKSEESLSSQAS) show a composition bias toward polar residues. Phosphoserine is present on serine 636. Over residues 672–709 (AGSCESLSSSSSSESSSSESSSSSSESSAAGLGALSGS) the composition is skewed to low complexity. Serine 727 carries the post-translational modification Phosphoserine. The span at 752-766 (PGDPAPPASPAPPAP) shows a compositional bias: pro residues. 2 stretches are compositionally biased toward low complexity: residues 813–829 (AGGAPASATPTPALSPG) and 896–919 (PARLMALALAERAQQVAEQQSQQE). Composition is skewed to polar residues over residues 972-981 (RQQSDGSLLR) and 1019-1028 (SPCSVPSQVP). Residue tyrosine 1169 is modified to Phosphotyrosine. Residues 1175-1189 (GPRGPSPASSSSSSP) show a composition bias toward low complexity. Position 1244 is an omega-N-methylarginine (arginine 1244). Polar residues predominate over residues 1274–1287 (SWSLHSEGQTRSYC).

The protein belongs to the PX domain-containing GAP family. As to quaternary structure, specifically interacts with CDC42 and RHOQ/TC10 through its Rho-GAP domain. Interacts with NEK6.

Its function is as follows. May be involved in several stages of intracellular trafficking. Could play an important role in the regulation of glucose transport by insulin. May act as a downstream effector of RHOQ/TC10 in the regulation of insulin-stimulated glucose transport. The sequence is that of Rho GTPase-activating protein 33 (ARHGAP33) from Homo sapiens (Human).